Consider the following 129-residue polypeptide: Follitropin subunit beta (129 aa).

The first 18 residues, 1–18, serve as a signal peptide directing secretion; it reads MKTVQFCFLFCCWKAICC. 6 disulfide bridges follow: cysteine 21-cysteine 69, cysteine 35-cysteine 84, cysteine 38-cysteine 122, cysteine 46-cysteine 100, cysteine 50-cysteine 102, and cysteine 105-cysteine 112. Residues asparagine 25 and asparagine 42 are each glycosylated (N-linked (GlcNAc...) asparagine).

It belongs to the glycoprotein hormones subunit beta family. As to quaternary structure, heterodimer. The active follitropin is a heterodimer composed of an alpha chain/CGA shared with other hormones and a unique beta chain/FSHB shown here.

It is found in the secreted. Together with the alpha chain CGA constitutes follitropin, the follicle-stimulating hormone, and provides its biological specificity to the hormone heterodimer. Binds FSHR, a G protein-coupled receptor, on target cells to activate downstream signaling pathways. Follitropin is involved in follicle development and spermatogenesis in reproductive organs. The polypeptide is Follitropin subunit beta (FSHB) (Macaca fascicularis (Crab-eating macaque)).